A 622-amino-acid chain; its full sequence is Phosphoribomutase (622 aa).

Substrate contacts are provided by residues Thr57, Arg61, 158-159, and Lys168; that span reads SH. Ser158 acts as the Phosphoserine intermediate in catalysis. Ser158 is a Mg(2+) binding site. Ser158 is modified (phosphoserine). Mg(2+)-binding residues include Asp325, Asp327, and Asp329. Residues 329–330, Thr404, 428–430, and Lys442 contribute to the substrate site; these read DR and EEA.

Belongs to the phosphohexose mutase family. Mg(2+) serves as cofactor.

Its subcellular location is the cytoplasm. The protein resides in the nucleus. The enzyme catalyses alpha-D-ribose 1-phosphate = D-ribose 5-phosphate. Its function is as follows. Major phosphoribomutase that converts ribose 1-phosphate to ribose 5-phosphate. Involved in ribose salvage via the pentose phosphate pathway. The protein is Phosphoribomutase of Saccharomyces cerevisiae (strain ATCC 204508 / S288c) (Baker's yeast).